Consider the following 779-residue polypeptide: Endonuclease MutS2 (779 aa).

Residue 328–335 coordinates ATP; that stretch reads GPNTGGKT. The region spanning 704–779 is the Smr domain; that stretch reads LDLRGKRYEE…GSGATIVTLG (76 aa).

Belongs to the DNA mismatch repair MutS family. MutS2 subfamily. In terms of assembly, homodimer. Binds to stalled ribosomes, contacting rRNA.

In terms of biological role, endonuclease that is involved in the suppression of homologous recombination and thus may have a key role in the control of bacterial genetic diversity. Its function is as follows. Acts as a ribosome collision sensor, splitting the ribosome into its 2 subunits. Detects stalled/collided 70S ribosomes which it binds and splits by an ATP-hydrolysis driven conformational change. Acts upstream of the ribosome quality control system (RQC), a ribosome-associated complex that mediates the extraction of incompletely synthesized nascent chains from stalled ribosomes and their subsequent degradation. Probably generates substrates for RQC. This Streptococcus pyogenes serotype M18 (strain MGAS8232) protein is Endonuclease MutS2.